The following is a 325-amino-acid chain: S-adenosylmethionine carrier 1, chloroplastic/mitochondrial (325 aa).

The transit peptide at methionine 1–alanine 38 directs the protein to the chloroplast and mitochondrion. 3 Solcar repeats span residues arginine 52–lysine 124, leucine 133–glycine 215, and glutamate 228–threonine 310. A run of 5 helical transmembrane segments spans residues phenylalanine 55 to isoleucine 75, tyrosine 97 to valine 117, histidine 132 to isoleucine 152, alanine 230 to isoleucine 250, and glycine 285 to glutamate 305.

The protein belongs to the mitochondrial carrier (TC 2.A.29) family. Expressed in seedlings, cotyledons, leaves and flowers. Lower levels of expression in stems and roots. Not detected in senescent leaves, petals and pollen grains.

The protein localises to the mitochondrion membrane. It localises to the plastid. Its subcellular location is the chloroplast membrane. Inhibited strongly by tannic acid, bromocresol purple, mercuric chloride, mersalyl, p-hydroxymercuribenzoate, S-adenosylhomocysteine, S-adenosylcysteine and adenosylornithine, and to a lesser extent by N-ethylmaleimide, bathophenanthroline and pyridoxal-5'-P. In terms of biological role, transporter involved in exchange reactions through membranes. Has a low uniporter activity. Specifically mediates the transport of S-adenosylmethionine (SAM) and its closest analogs. Probably involved in the uptake of SAM in exchange for S-adenosylhomocysteine (SAHC), which is produced from SAM in the mitochondrial matrix and plastidial stroma by methyltransferase activities. The chain is S-adenosylmethionine carrier 1, chloroplastic/mitochondrial (SAMC1) from Arabidopsis thaliana (Mouse-ear cress).